The sequence spans 75 residues: Small ribosomal subunit protein bS18 (75 aa).

It belongs to the bacterial ribosomal protein bS18 family. Part of the 30S ribosomal subunit. Forms a tight heterodimer with protein bS6.

Functionally, binds as a heterodimer with protein bS6 to the central domain of the 16S rRNA, where it helps stabilize the platform of the 30S subunit. The protein is Small ribosomal subunit protein bS18 of Shewanella frigidimarina (strain NCIMB 400).